The sequence spans 245 residues: Eukaryotic translation initiation factor 3 subunit K (245 aa).

Residues 46 to 227 enclose the PCI domain; that stretch reads YDCYANLALL…EAKGTVVREN (182 aa).

Belongs to the eIF-3 subunit K family. Component of the eukaryotic translation initiation factor 3 (eIF-3) complex.

It localises to the cytoplasm. In terms of biological role, component of the eukaryotic translation initiation factor 3 (eIF-3) complex, which is involved in protein synthesis of a specialized repertoire of mRNAs and, together with other initiation factors, stimulates binding of mRNA and methionyl-tRNAi to the 40S ribosome. The eIF-3 complex specifically targets and initiates translation of a subset of mRNAs involved in cell proliferation. This is Eukaryotic translation initiation factor 3 subunit K from Sclerotinia sclerotiorum (strain ATCC 18683 / 1980 / Ss-1) (White mold).